The chain runs to 301 residues: tRNA pseudouridine synthase B (301 aa).

The active-site Nucleophile is aspartate 38.

This sequence belongs to the pseudouridine synthase TruB family. Type 1 subfamily.

It catalyses the reaction uridine(55) in tRNA = pseudouridine(55) in tRNA. In terms of biological role, responsible for synthesis of pseudouridine from uracil-55 in the psi GC loop of transfer RNAs. In Ehrlichia canis (strain Jake), this protein is tRNA pseudouridine synthase B.